We begin with the raw amino-acid sequence, 357 residues long: Heat-inducible transcription repressor HrcA (357 aa).

The protein belongs to the HrcA family.

In terms of biological role, negative regulator of class I heat shock genes (grpE-dnaK-dnaJ and groELS operons). Prevents heat-shock induction of these operons. This chain is Heat-inducible transcription repressor HrcA, found in Chlorobium luteolum (strain DSM 273 / BCRC 81028 / 2530) (Pelodictyon luteolum).